Reading from the N-terminus, the 447-residue chain is ATP-dependent protease ATPase subunit HslU (447 aa).

Residues Ile-18, 60–65 (GVGKTE), Asp-259, Glu-325, and Arg-397 contribute to the ATP site.

It belongs to the ClpX chaperone family. HslU subfamily. A double ring-shaped homohexamer of HslV is capped on each side by a ring-shaped HslU homohexamer. The assembly of the HslU/HslV complex is dependent on binding of ATP.

The protein resides in the cytoplasm. In terms of biological role, ATPase subunit of a proteasome-like degradation complex; this subunit has chaperone activity. The binding of ATP and its subsequent hydrolysis by HslU are essential for unfolding of protein substrates subsequently hydrolyzed by HslV. HslU recognizes the N-terminal part of its protein substrates and unfolds these before they are guided to HslV for hydrolysis. The sequence is that of ATP-dependent protease ATPase subunit HslU from Burkholderia pseudomallei (strain K96243).